The following is a 320-amino-acid chain: uncharacterized protein (320 aa).

This is an uncharacterized protein from Bacillus subtilis (strain 168).